The chain runs to 474 residues: MPFLPFSYYPFSLEVILMEYPKIVVKPPGPRAKELIEREKKVLSTGIGVKLFPLVPKRGFGPFIEDVDGNVFIDFLAGAAAASTGYAHPKLVKAVKEQVELIQHSMIGYTHSERAIRVAEKLVEISPIENSKVIFGLSGSDAVDMAIKVSKFSTRRPWILAFIGAYHGQTLGATSVASFQVSQKRGYSPLMPNVFWIPYPNPFRNIWGINGYEEPDELINRVLDYLEYYVFSHVVPPDEVAALFAEPIQGDAGIVVPPENFFKELKKLLEEYGILLVMDEVQTGIGRTGKWFASEWFNVKPDMIIFGKGVASGMGLSGVIGRKEIMDITSGSALLTPAANPVISAAAEATLEIIEEENLLKNALEVGEFIMGRLKEIKERFEIIGDVRGKGLMIGVEIVKENGRPDPEMTGKICWRAFELGLILPSYGMFGNVIRITPPLVLTKEVAEKALEIIERAIKDTLTGKVERKVVTWH.

Residues 139–140 (GS) and glutamine 282 contribute to the pyridoxal 5'-phosphate site. Residue lysine 308 is modified to N6-(pyridoxal phosphate)lysine. Threonine 336 contacts pyridoxal 5'-phosphate.

The protein belongs to the class-III pyridoxal-phosphate-dependent aminotransferase family. Homohexamer. Requires pyridoxal 5'-phosphate as cofactor.

It carries out the reaction L-alanine = D-alanine. It catalyses the reaction L-serine = D-serine. Completely inhibited by hydroxylamine hydrochloride. Catalyzes the interconversion of L-alanine and D-alanine, and L-serine and D-serine. Has weak activity with valine and threonine. In Pyrococcus horikoshii (strain ATCC 700860 / DSM 12428 / JCM 9974 / NBRC 100139 / OT-3), this protein is Alanine/serine racemase.